A 361-amino-acid polypeptide reads, in one-letter code: Peptide chain release factor 1 (361 aa).

At Gln-236 the chain carries N5-methylglutamine. Positions 285–309 (TAKDSARAADRKAQVGSGDRSERIR) are enriched in basic and acidic residues. Residues 285–313 (TAKDSARAADRKAQVGSGDRSERIRTYNF) form a disordered region.

This sequence belongs to the prokaryotic/mitochondrial release factor family. In terms of processing, methylated by PrmC. Methylation increases the termination efficiency of RF1.

It localises to the cytoplasm. Functionally, peptide chain release factor 1 directs the termination of translation in response to the peptide chain termination codons UAG and UAA. The protein is Peptide chain release factor 1 of Methylorubrum populi (strain ATCC BAA-705 / NCIMB 13946 / BJ001) (Methylobacterium populi).